We begin with the raw amino-acid sequence, 307 residues long: Aspartate carbamoyltransferase catalytic subunit (307 aa).

The carbamoyl phosphate site is built by R54 and T55. K83 is an L-aspartate binding site. Residues R104, H132, and Q135 each coordinate carbamoyl phosphate. Residues R165 and R228 each contribute to the L-aspartate site. Carbamoyl phosphate-binding residues include L267 and P268.

It belongs to the aspartate/ornithine carbamoyltransferase superfamily. ATCase family. Heterododecamer (2C3:3R2) of six catalytic PyrB chains organized as two trimers (C3), and six regulatory PyrI chains organized as three dimers (R2).

The enzyme catalyses carbamoyl phosphate + L-aspartate = N-carbamoyl-L-aspartate + phosphate + H(+). It participates in pyrimidine metabolism; UMP biosynthesis via de novo pathway; (S)-dihydroorotate from bicarbonate: step 2/3. In terms of biological role, catalyzes the condensation of carbamoyl phosphate and aspartate to form carbamoyl aspartate and inorganic phosphate, the committed step in the de novo pyrimidine nucleotide biosynthesis pathway. The sequence is that of Aspartate carbamoyltransferase catalytic subunit from Clostridium perfringens (strain SM101 / Type A).